A 70-amino-acid polypeptide reads, in one-letter code: Conotoxin TsMLKM-011 (70 aa).

The signal sequence occupies residues 1–24 (MLKMGVVLFVFLVLFPLATLQLDA). Residues 25 to 54 (DQPVERYAENKQLVSPYERRQIILHALGQR) constitute a propeptide that is removed on maturation. Disulfide bonds link C56–C66, C57–C68, and C62–C69.

It belongs to the conotoxin M superfamily. As to expression, expressed by the venom duct.

The protein resides in the secreted. The polypeptide is Conotoxin TsMLKM-011 (Conus tessulatus (Tessellate cone)).